A 146-amino-acid chain; its full sequence is Hemoglobin subunit beta (146 aa).

The Globin domain occupies 2–146 (HWSAEEKQLI…VAHALARKYH (145 aa)). Residues His-63 and His-92 each coordinate heme b.

Belongs to the globin family. As to quaternary structure, heterotetramer of two alpha chains and two beta chains. As to expression, red blood cells.

In terms of biological role, involved in oxygen transport from the lung to the various peripheral tissues. This chain is Hemoglobin subunit beta (HBB), found in Anseranas semipalmata (Magpie goose).